Here is a 152-residue protein sequence, read N- to C-terminus: Cyanate hydratase (152 aa).

Residues Arg-98, Glu-101, and Ser-124 contribute to the active site.

It belongs to the cyanase family.

The catalysed reaction is cyanate + hydrogencarbonate + 3 H(+) = NH4(+) + 2 CO2. Its function is as follows. Catalyzes the reaction of cyanate with bicarbonate to produce ammonia and carbon dioxide. The protein is Cyanate hydratase of Uncinocarpus reesii (strain UAMH 1704).